The chain runs to 143 residues: MKLNTKYHGSIEYEERDVIYFEKGIPGFEELNKFIIFPVEDNEVFLVFHSIENEDIGIIVTSPFNIEKDYEIQLEEEQITNLKLQDEKDALVLNTVTLDSDIDKITVNLRAPIIINIKEKIGEQIIINSDKYKVKHPLFKEEA.

It belongs to the FliW family. In terms of assembly, interacts with translational regulator CsrA and flagellin(s).

It localises to the cytoplasm. Functionally, acts as an anti-CsrA protein, binds CsrA and prevents it from repressing translation of its target genes, one of which is flagellin. Binds to flagellin and participates in the assembly of the flagellum. This Clostridium botulinum (strain 657 / Type Ba4) protein is Flagellar assembly factor FliW.